A 110-amino-acid polypeptide reads, in one-letter code: MIRNVLLAFMICSGMTLLGGCSSVMSHTGGKEGTYPGTRASATMIGDDETNWGTKSLAILDMPFTAVMDTLLLPWDVFRKDSSVRSRVEKSEANAQATNAVIPPARMPDN.

An N-terminal signal peptide occupies residues 1–26 (MIRNVLLAFMICSGMTLLGGCSSVMS). Residues 87 to 110 (RVEKSEANAQATNAVIPPARMPDN) are disordered.

This sequence to E.coli YceK.

This is an uncharacterized protein from Escherichia coli (strain K12).